The sequence spans 182 residues: MSELTTIARPYAKAVFDFAVEQSEKDKSAVEKWTNMLEFLSELIRHDKVQSYLTSTSSTFKLADTVILICGEQLDQYGQNLVRLMAENKRLAVLPAVFNEFKSYVEEYKSLSQVEVVSAQQLNDVQQQKIITAMEKRLARKVILNCRIDSSLIAGAIIRTNDFVIDGSCRGQINRLANELRL.

The protein belongs to the ATPase delta chain family. In terms of assembly, F-type ATPases have 2 components, F(1) - the catalytic core - and F(0) - the membrane proton channel. F(1) has five subunits: alpha(3), beta(3), gamma(1), delta(1), epsilon(1). F(0) has three main subunits: a(1), b(2) and c(10-14). The alpha and beta chains form an alternating ring which encloses part of the gamma chain. F(1) is attached to F(0) by a central stalk formed by the gamma and epsilon chains, while a peripheral stalk is formed by the delta and b chains.

It is found in the cell inner membrane. Functionally, f(1)F(0) ATP synthase produces ATP from ADP in the presence of a proton or sodium gradient. F-type ATPases consist of two structural domains, F(1) containing the extramembraneous catalytic core and F(0) containing the membrane proton channel, linked together by a central stalk and a peripheral stalk. During catalysis, ATP synthesis in the catalytic domain of F(1) is coupled via a rotary mechanism of the central stalk subunits to proton translocation. In terms of biological role, this protein is part of the stalk that links CF(0) to CF(1). It either transmits conformational changes from CF(0) to CF(1) or is implicated in proton conduction. In Histophilus somni (strain 2336) (Haemophilus somnus), this protein is ATP synthase subunit delta.